The following is a 451-amino-acid chain: PTS system galactitol-specific EIIC component (451 aa).

One can recognise a PTS EIIC type-2 domain in the interval 6–435 (MRYILDLGPT…IYLTGIFMTW (430 aa)). Helical transmembrane passes span 9–29 (ILDLGPTVMLPIVIIIFSKIL), 41–61 (LHIGIGFVGIGLVIGLMLDSI), 92–112 (ASQIALVAIPIAILVNVAMLL), 138–158 (LATGSWMIGMAGVVIHAAFVY), 218–238 (FGPFGEPVTVGFVMGLIIGIL), 305–325 (AVVSASLIFIPLTILIAVCVP), 329–349 (VLPFGDLATIGFFVAMAVAVH), 357–377 (LISGVIIMSITLWIATQTIGL), 392–412 (GMVASMDQGGSPITWLLIQVF), and 415–435 (QNIPGFIIIGAIYLTGIFMTW).

As to quaternary structure, forms a complex with one each of subunit of GatA, GatB and 2 subunits of GatC.

It localises to the cell inner membrane. Its function is as follows. The phosphoenolpyruvate-dependent sugar phosphotransferase system (PTS), a major carbohydrate active transport system, catalyzes the phosphorylation of incoming sugar substrates concomitant with their translocation across the cell membrane. The enzyme II complex composed of GatA, GatB and GatC is involved in galactitol transport. In Escherichia coli O157:H7, this protein is PTS system galactitol-specific EIIC component (gatC).